The following is a 201-amino-acid chain: Holliday junction branch migration complex subunit RuvA (201 aa).

Residues 1-64 (MFNSISGILS…EDQMRLFGFP (64 aa)) form a domain I region. The domain II stretch occupies residues 65–140 (NQAERSLFLD…KLTNLNEVSS (76 aa)). The segment at 140 to 144 (SKGQA) is flexible linker. The segment at 145–201 (SVSCEYEDIVTALTEMGFERKSVIVQVEKIAEEMKAAGSDPLKNEEELFRRSIVALS) is domain III.

This sequence belongs to the RuvA family. Homotetramer. Forms an RuvA(8)-RuvB(12)-Holliday junction (HJ) complex. HJ DNA is sandwiched between 2 RuvA tetramers; dsDNA enters through RuvA and exits via RuvB. An RuvB hexamer assembles on each DNA strand where it exits the tetramer. Each RuvB hexamer is contacted by two RuvA subunits (via domain III) on 2 adjacent RuvB subunits; this complex drives branch migration. In the full resolvosome a probable DNA-RuvA(4)-RuvB(12)-RuvC(2) complex forms which resolves the HJ.

It is found in the cytoplasm. Functionally, the RuvA-RuvB-RuvC complex processes Holliday junction (HJ) DNA during genetic recombination and DNA repair, while the RuvA-RuvB complex plays an important role in the rescue of blocked DNA replication forks via replication fork reversal (RFR). RuvA specifically binds to HJ cruciform DNA, conferring on it an open structure. The RuvB hexamer acts as an ATP-dependent pump, pulling dsDNA into and through the RuvAB complex. HJ branch migration allows RuvC to scan DNA until it finds its consensus sequence, where it cleaves and resolves the cruciform DNA. The protein is Holliday junction branch migration complex subunit RuvA of Treponema denticola (strain ATCC 35405 / DSM 14222 / CIP 103919 / JCM 8153 / KCTC 15104).